The chain runs to 874 residues: Leucine--tRNA ligase (874 aa).

Positions 43–53 (PYPSGRIHIGH) match the 'HIGH' region motif. Positions 630–634 (KMSKS) match the 'KMSKS' region motif. K633 contacts ATP.

This sequence belongs to the class-I aminoacyl-tRNA synthetase family.

It localises to the cytoplasm. The enzyme catalyses tRNA(Leu) + L-leucine + ATP = L-leucyl-tRNA(Leu) + AMP + diphosphate. The polypeptide is Leucine--tRNA ligase (Bradyrhizobium sp. (strain BTAi1 / ATCC BAA-1182)).